The chain runs to 234 residues: CD-NTase-associated protein 13 (234 aa).

Residues 20 to 42 (TIMKNVIANVSTAITLALMILWI) traverse the membrane as a helical segment.

The protein in the C-terminal section; belongs to the bacterial STING family.

It is found in the cell inner membrane. Its function is as follows. Effector protein of a CBASS antivirus system. CBASS (cyclic oligonucleotide-based antiphage signaling system) provides immunity against bacteriophage. The CD-NTase protein synthesizes cyclic nucleotides in response to infection; these serve as specific second messenger signals. The signals activate a diverse range of effectors, leading to bacterial cell death and thus abortive phage infection. A type I-D CBASS(GG) system. In terms of biological role, binds c-di-GMP (synthesized by the cognate CdnE encoded upstream in the same operon) and about 10-fold less well 3'3'-cGAMP, but not c-di-AMP, 2'3'-cGAMP or cUMP-AMP (tested with a protein without the transmembrane region). The effector protein for this CBASS system, its activity is stimulated by c-di-GMP and leads to cell death. This Roseivirga ehrenbergii (strain DSM 102268 / JCM 13514 / KCTC 12282 / NCIMB 14502 / KMM 6017) protein is CD-NTase-associated protein 13.